A 184-amino-acid chain; its full sequence is UPF0398 protein BCG9842_B3730 (184 aa).

This sequence belongs to the UPF0398 family.

The chain is UPF0398 protein BCG9842_B3730 from Bacillus cereus (strain G9842).